A 299-amino-acid polypeptide reads, in one-letter code: MKPDAHQVKQFLLNLQDTICQQLTAVDGAEFVEDSWQREGGGGGRSRVLRNGGVFEQAGVNFSHVHGEAMPASATAHRPELAGRSFEAMGVSLVVHPHNPYVPTSHANVRFFIAEKPGAEPVWWFGGGFDLTPFYGFEEDAIHWHRTARDLCLPFGEDVYLRYKKWCDDYFYLKHRNEQRGIGGLFFDDLNTPDFDHCFAFMQAVGKGYTDAYLPIVERRKAMAYGERERNFQLYRRGRYVEFNLVWDRGTLFGLQTGGRTESILMSMPPLVRWEYDYHPEAGSPEAALSEFIKVRDWV.

Substrate is bound at residue S92. Residues H96 and H106 each contribute to the Mn(2+) site. H106 functions as the Proton donor in the catalytic mechanism. 108-110 is a substrate binding site; that stretch reads NVR. 2 residues coordinate Mn(2+): H145 and H175. Positions 240–275 are important for dimerization; sequence YVEFNLVWDRGTLFGLQTGGRTESILMSMPPLVRWE. 258 to 260 is a binding site for substrate; that stretch reads GGR.

The protein belongs to the aerobic coproporphyrinogen-III oxidase family. Homodimer. It depends on Mn(2+) as a cofactor.

Its subcellular location is the cytoplasm. It catalyses the reaction coproporphyrinogen III + O2 + 2 H(+) = protoporphyrinogen IX + 2 CO2 + 2 H2O. The protein operates within porphyrin-containing compound metabolism; protoporphyrin-IX biosynthesis; protoporphyrinogen-IX from coproporphyrinogen-III (O2 route): step 1/1. Involved in the heme biosynthesis. Catalyzes the aerobic oxidative decarboxylation of propionate groups of rings A and B of coproporphyrinogen-III to yield the vinyl groups in protoporphyrinogen-IX. The sequence is that of Oxygen-dependent coproporphyrinogen-III oxidase from Escherichia coli (strain SE11).